A 210-amino-acid chain; its full sequence is Cdc42 effector protein 2 (210 aa).

S2 carries the N-acetylserine modification. In terms of domain architecture, CRIB spans 30 to 44 (ISPPLGDFRHTIHIG). S31, S101, and S141 each carry phosphoserine. The disordered stretch occupies residues 122–171 (PTAQAPPKPPRLHLETPQPSPQEGGSVDIWRIPETGSPNSGLTPESGAEE).

Belongs to the BORG/CEP family. In terms of assembly, interacts with RHOQ and CDC42 in a GTP-dependent manner, and with SEPT7. In terms of tissue distribution, highly expressed in the heart. Weakly expressed in the pancreas and liver.

The protein resides in the endomembrane system. It is found in the cytoplasm. Its subcellular location is the cytoskeleton. Its function is as follows. Probably involved in the organization of the actin cytoskeleton. May act downstream of CDC42 to induce actin filament assembly leading to cell shape changes. Induces pseudopodia formation in fibroblasts in a CDC42-dependent manner. The sequence is that of Cdc42 effector protein 2 (CDC42EP2) from Homo sapiens (Human).